A 493-amino-acid chain; its full sequence is Alpha-amylase-related protein (493 aa).

A signal peptide spans 1-19 (MFKFALALTLCLAGSLSLA). Pyrrolidone carboxylic acid is present on Gln20. Cys47 and Cys103 form a disulfide bridge. Positions 117, 168, and 177 each coordinate Ca(2+). Cys156 and Cys170 form a disulfide bridge. Residue Arg205 participates in chloride binding. Asp207 functions as the Nucleophile in the catalytic mechanism. Ca(2+) is bound at residue His211. The Proton donor role is filled by Glu244. Chloride-binding residues include Asn307 and Arg342. Intrachain disulfides connect Cys375–Cys381, Cys417–Cys440, and Cys447–Cys459.

It belongs to the glycosyl hydrolase 13 family. In terms of assembly, monomer. Ca(2+) is required as a cofactor. Requires chloride as cofactor.

The protein resides in the secreted. It carries out the reaction Endohydrolysis of (1-&gt;4)-alpha-D-glucosidic linkages in polysaccharides containing three or more (1-&gt;4)-alpha-linked D-glucose units.. This chain is Alpha-amylase-related protein (Amyrel), found in Drosophila elegans (Fruit fly).